The chain runs to 438 residues: Asparagine--tRNA ligase (438 aa).

The protein belongs to the class-II aminoacyl-tRNA synthetase family. Homodimer.

It localises to the cytoplasm. The catalysed reaction is tRNA(Asn) + L-asparagine + ATP = L-asparaginyl-tRNA(Asn) + AMP + diphosphate + H(+). The polypeptide is Asparagine--tRNA ligase (Thermus thermophilus (strain ATCC BAA-163 / DSM 7039 / HB27)).